The following is a 226-amino-acid chain: Neuron-specific vesicular protein calcyon (226 aa).

Residues 1-23 form a disordered region; sequence MVKLGCSFSGKPGKETGDQDGAA. Over 1 to 88 the chain is Extracellular; it reads MVKLGCSFSG…EEGRRLPTAR (88 aa). The chain crosses the membrane as a helical span at residues 89–109; it reads MIAFAMALLGCVLIMYKAIWY. Residues 110–226 lie on the Cytoplasmic side of the membrane; it reads DQFTCPDGFL…AEDVPSQSPK (117 aa). The disordered stretch occupies residues 189–226; the sequence is TAAAAAAAEGNEPSGKPLDMREKEDPQKAEDVPSQSPK. The segment covering 206–219 has biased composition (basic and acidic residues); it reads LDMREKEDPQKAED.

It belongs to the NSG family. In terms of assembly, interacts with CLTA. Expressed exclusively in neurons (at protein level). In all age groups, expressed at significantly higher levels in the medial prefrontal and orbital frontal cortices of spontaneously hypertensive rats (SHR), a model of attention deficit-hyperactivity disorder, than Wistar Kyoto (WKY) animals. In the motor cortex, dorsal striatum and nucleus accumbens, expression is significantly elevated in SHR only in younger animals.

Its subcellular location is the cytoplasmic vesicle membrane. The protein localises to the cell membrane. In terms of biological role, interacts with clathrin light chain A and stimulates clathrin self-assembly and clathrin-mediated endocytosis. This chain is Neuron-specific vesicular protein calcyon (Caly), found in Rattus norvegicus (Rat).